Consider the following 531-residue polypeptide: Nuclear RNA export factor 3 (531 aa).

Disordered stretches follow at residues 33-59 (RSEPVNPGMHSSSHQQQDGDAAMHGAH) and 83-106 (QDQTHVNMEREQKPPERRMEGNMP). Over residues 41-50 (MHSSSHQQQD) the composition is skewed to polar residues. Residues 83-102 (QDQTHVNMEREQKPPERRME) show a composition bias toward basic and acidic residues. The 80-residue stretch at 113 to 192 (WFKITVPFGI…IFVNPAGIPH (80 aa)) folds into the RRM domain. One can recognise an NTF2 domain in the interval 344-494 (LVLQFLQQYY…LCIVNDKLFV (151 aa)).

It belongs to the NXF family. In terms of assembly, interacts with NXT1, NXT2, E1B-AP5 and CRM1 nuclear export factor. As to expression, expressed at high level in testis and at low level in a small number of tissues.

Its subcellular location is the nucleus. It localises to the cytoplasm. Its function is as follows. May function as a tissue-specific nuclear mRNA export factor. The protein is Nuclear RNA export factor 3 (NXF3) of Homo sapiens (Human).